Reading from the N-terminus, the 1004-residue chain is Kinesin-like protein KIN-14R (1004 aa).

Disordered stretches follow at residues 1–21 (MEEE…RIGD), 61–90 (PYVD…MQHD), and 110–169 (ELFS…ATMG). Positions 63–75 (VDDDDDGNSEEEN) are enriched in acidic residues. The span at 115-125 (PSPPQGPPSPS) shows a compositional bias: pro residues. Coiled-coil stretches lie at residues 189–230 (CGQL…AQAS) and 266–338 (LNDL…LYNK). The Kinesin motor domain occupies 345-671 (NIRVFCRCRP…LNFASRVRGI (327 aa)). 428-435 (GQTGTGKT) lines the ATP pocket. Positions 691–742 (MAGRAKQDSKNKDAQIKSMEETIQSLEAKNKAKDLLTMNLQEKIKELEAQLL) form a coiled coil. Disordered regions lie at residues 759–791 (DHLH…STAE) and 946–1004 (SGRR…RQLN). Positions 948-958 (RRAGAGVAGTT) are enriched in low complexity. A compositionally biased stretch (polar residues) spans 995–1004 (NNGTSLRQLN).

This sequence belongs to the TRAFAC class myosin-kinesin ATPase superfamily. Kinesin family. KIN-14 subfamily.

The polypeptide is Kinesin-like protein KIN-14R (Oryza sativa subsp. japonica (Rice)).